The sequence spans 281 residues: Energy-coupling factor transporter ATP-binding protein EcfA2 (281 aa).

Positions 3–242 constitute an ABC transporter domain; the sequence is IKVTGLTYVY…TETLEEIGLA (240 aa). 40–47 contributes to the ATP binding site; it reads GHTGSGKS.

The protein belongs to the ABC transporter superfamily. Energy-coupling factor EcfA family. In terms of assembly, forms a stable energy-coupling factor (ECF) transporter complex composed of 2 membrane-embedded substrate-binding proteins (S component), 2 ATP-binding proteins (A component) and 2 transmembrane proteins (T component).

The protein resides in the cell membrane. In terms of biological role, ATP-binding (A) component of a common energy-coupling factor (ECF) ABC-transporter complex. Unlike classic ABC transporters this ECF transporter provides the energy necessary to transport a number of different substrates. This chain is Energy-coupling factor transporter ATP-binding protein EcfA2, found in Acetivibrio thermocellus (strain ATCC 27405 / DSM 1237 / JCM 9322 / NBRC 103400 / NCIMB 10682 / NRRL B-4536 / VPI 7372) (Clostridium thermocellum).